The chain runs to 214 residues: Adenylate kinase (214 aa).

Residue 11-16 coordinates ATP; that stretch reads GTGKGT. The NMP stretch occupies residues 31 to 61; it reads SSGDLFRFYAKEEKTALAEEIKSYINNGLYV. AMP contacts are provided by residues S32, R37, 59–61, 87–90, and Q94; these read LYV and GYPR. An LID region spans residues 124 to 163; it reads LRRSCPQCKRIYNINSVDFKPKVANLCDLCKVELIHRKDD. Residue R125 participates in ATP binding. Zn(2+) contacts are provided by C128 and C131. 134-135 lines the ATP pocket; that stretch reads IY. Residues C150 and C153 each contribute to the Zn(2+) site. AMP is bound by residues R160 and R171. Position 199 (K199) interacts with ATP.

Belongs to the adenylate kinase family. Monomer.

The protein resides in the cytoplasm. The catalysed reaction is AMP + ATP = 2 ADP. It functions in the pathway purine metabolism; AMP biosynthesis via salvage pathway; AMP from ADP: step 1/1. Catalyzes the reversible transfer of the terminal phosphate group between ATP and AMP. Plays an important role in cellular energy homeostasis and in adenine nucleotide metabolism. The polypeptide is Adenylate kinase (Mycoplasmoides gallisepticum (strain R(low / passage 15 / clone 2)) (Mycoplasma gallisepticum)).